The following is a 387-amino-acid chain: Dual specificity protein phosphatase MPK-4 (387 aa).

The segment covering 1-15 (MEQSQSQRQAWPSSS) has biased composition (polar residues). A disordered region spans residues 1 to 27 (MEQSQSQRQAWPSSSAGGGKAQDSGVL). Positions 35–182 (GPVSIDEVDT…LKLFRRMGCK (148 aa)) constitute a Tyrosine-protein phosphatase domain. Residue C126 is the Phosphocysteine intermediate of the active site. Positions 248-267 (LEHKPRDRPPQEVVPKEKEE) are disordered.

This sequence belongs to the protein-tyrosine phosphatase family. Non-receptor class dual specificity subfamily. As to quaternary structure, interacts (via tyrosine-protein phosphatase domain) with bsk/JNK; the interaction dephosphorylates bsk.

The protein resides in the nucleus. It localises to the cytoplasm. The catalysed reaction is O-phospho-L-tyrosyl-[protein] + H2O = L-tyrosyl-[protein] + phosphate. It catalyses the reaction O-phospho-L-seryl-[protein] + H2O = L-seryl-[protein] + phosphate. The enzyme catalyses O-phospho-L-threonyl-[protein] + H2O = L-threonyl-[protein] + phosphate. Its activity is regulated as follows. Inhibited by the tyrosine phosphatase inhibitor sodium vanadate. Dual specificity phosphatase; can dephosphorylate both phosphotyrosine and phosphoserine or phosphothreonine residues. May suppress bsk/JNK activation during the immune response. This is Dual specificity protein phosphatase MPK-4 from Drosophila melanogaster (Fruit fly).